The primary structure comprises 1202 residues: Nucleolar protein 6 (1202 aa).

A disordered region spans residues 1–64 (MNKTKRKQQS…KKYKDNETNK (64 aa)).

This sequence belongs to the NRAP family. As to quaternary structure, part of the small subunit (SSU) processome, composed of more than 70 proteins and the RNA chaperone small nucleolar RNA (snoRNA) U3.

The protein localises to the nucleus. It is found in the nucleolus. The protein resides in the chromosome. Part of the small subunit (SSU) processome, first precursor of the small eukaryotic ribosomal subunit. During the assembly of the SSU processome in the nucleolus, many ribosome biogenesis factors, an RNA chaperone and ribosomal proteins associate with the nascent pre-rRNA and work in concert to generate RNA folding, modifications, rearrangements and cleavage as well as targeted degradation of pre-ribosomal RNA by the RNA exosome. In Drosophila willistoni (Fruit fly), this protein is Nucleolar protein 6.